A 200-amino-acid chain; its full sequence is Small ribosomal subunit protein uS4c (200 aa).

An S4 RNA-binding domain is found at 91-154 (MRLDNVVFRL…NSRKMVTEAN (64 aa)).

The protein belongs to the universal ribosomal protein uS4 family. Part of the 30S ribosomal subunit. Contacts protein S5. The interaction surface between S4 and S5 is involved in control of translational fidelity.

It is found in the plastid. The protein resides in the chloroplast. In terms of biological role, one of the primary rRNA binding proteins, it binds directly to 16S rRNA where it nucleates assembly of the body of the 30S subunit. Its function is as follows. With S5 and S12 plays an important role in translational accuracy. This chain is Small ribosomal subunit protein uS4c (rps4), found in Oltmannsiellopsis viridis (Marine flagellate).